The sequence spans 905 residues: Alanine--tRNA ligase (905 aa).

4 residues coordinate Zn(2+): His569, His573, Cys693, and His697.

Belongs to the class-II aminoacyl-tRNA synthetase family. It depends on Zn(2+) as a cofactor.

The protein resides in the cytoplasm. The catalysed reaction is tRNA(Ala) + L-alanine + ATP = L-alanyl-tRNA(Ala) + AMP + diphosphate. Catalyzes the attachment of alanine to tRNA(Ala) in a two-step reaction: alanine is first activated by ATP to form Ala-AMP and then transferred to the acceptor end of tRNA(Ala). Also edits incorrectly charged Ser-tRNA(Ala) and Gly-tRNA(Ala) via its editing domain. The polypeptide is Alanine--tRNA ligase (Roseiflexus castenholzii (strain DSM 13941 / HLO8)).